The following is a 182-amino-acid chain: UPF0397 protein BcerKBAB4_2500 (182 aa).

The next 5 helical transmembrane spans lie at 9–29 (VVAI…GFSI), 40–60 (AILT…IGLI), 71–91 (WGIW…MGLI), 114–134 (IAGL…DIIV), and 142–162 (IVIQ…VLGL).

The protein belongs to the UPF0397 family.

It is found in the cell membrane. This is UPF0397 protein BcerKBAB4_2500 from Bacillus mycoides (strain KBAB4) (Bacillus weihenstephanensis).